Reading from the N-terminus, the 229-residue chain is Small ribosomal subunit protein uS2c (229 aa).

Belongs to the universal ribosomal protein uS2 family.

The protein resides in the plastid. It is found in the chloroplast. In Emiliania huxleyi (Coccolithophore), this protein is Small ribosomal subunit protein uS2c (rps2).